We begin with the raw amino-acid sequence, 153 residues long: MVFEGHLVGTGLKVGVVVGRFNEFITSKLLGGALDGLKRHGVEENDIDVAWVPGAFEIPLIAKKMANSGKYDAVITLGTVIRGATTHYDYVCNEVAKGVASLSLQTDIPVIFGVLTTETIEQAIERAGTKAGNKGYESAVAAIEMAHLSKHWA.

Residues Phe21, 55-57 (AFE), and 79-81 (TVI) contribute to the 5-amino-6-(D-ribitylamino)uracil site. 84–85 (AT) contacts (2S)-2-hydroxy-3-oxobutyl phosphate. The active-site Proton donor is the His87. Phe112 contacts 5-amino-6-(D-ribitylamino)uracil. Arg126 lines the (2S)-2-hydroxy-3-oxobutyl phosphate pocket.

It belongs to the DMRL synthase family. In terms of assembly, forms an icosahedral capsid composed of 60 subunits, arranged as a dodecamer of pentamers.

The catalysed reaction is (2S)-2-hydroxy-3-oxobutyl phosphate + 5-amino-6-(D-ribitylamino)uracil = 6,7-dimethyl-8-(1-D-ribityl)lumazine + phosphate + 2 H2O + H(+). The protein operates within cofactor biosynthesis; riboflavin biosynthesis; riboflavin from 2-hydroxy-3-oxobutyl phosphate and 5-amino-6-(D-ribitylamino)uracil: step 1/2. Catalyzes the formation of 6,7-dimethyl-8-ribityllumazine by condensation of 5-amino-6-(D-ribitylamino)uracil with 3,4-dihydroxy-2-butanone 4-phosphate. This is the penultimate step in the biosynthesis of riboflavin. This chain is 6,7-dimethyl-8-ribityllumazine synthase, found in Bacillus anthracis (strain A0248).